The sequence spans 287 residues: MLLKGAPAADGILATVKDNIRSQSGSPGLAVVLIGNNPASEIYVNMKVKRARDLGMISRSYRKPSDATLSDILSLIHELNCDENIHGVLVQLPLPKHLDTQTILSSISPNKDVDGLHPVNMGKLLLGETDGFIPCTPSGIVELFKYYEIPLYGKHVVILGRSNIVGKPLSALLMQKHADTNASVTVLHSQSEHLKEITKTADILVSAIGVPLFVTKEMISEKCIVIDVGTSRVPADNPKGYSLVGDVDFNNVVPVCQAITPVPGGVGPMTVAMLMRNTWESFLRHTL.

NADP(+) contacts are provided by residues 160 to 162 (GRS), S189, and T230.

It belongs to the tetrahydrofolate dehydrogenase/cyclohydrolase family. As to quaternary structure, homodimer.

It catalyses the reaction (6R)-5,10-methylene-5,6,7,8-tetrahydrofolate + NADP(+) = (6R)-5,10-methenyltetrahydrofolate + NADPH. The catalysed reaction is (6R)-5,10-methenyltetrahydrofolate + H2O = (6R)-10-formyltetrahydrofolate + H(+). Its pathway is one-carbon metabolism; tetrahydrofolate interconversion. Catalyzes the oxidation of 5,10-methylenetetrahydrofolate to 5,10-methenyltetrahydrofolate and then the hydrolysis of 5,10-methenyltetrahydrofolate to 10-formyltetrahydrofolate. This Chlamydia muridarum (strain MoPn / Nigg) protein is Bifunctional protein FolD.